We begin with the raw amino-acid sequence, 164 residues long: Ribosome maturation factor RimM (164 aa).

Positions 92–164 constitute a PRC barrel domain; that stretch reads PDSEYYVANL…FVVIVPPEFI (73 aa).

This sequence belongs to the RimM family. As to quaternary structure, binds ribosomal protein uS19.

The protein resides in the cytoplasm. Functionally, an accessory protein needed during the final step in the assembly of 30S ribosomal subunit, possibly for assembly of the head region. Essential for efficient processing of 16S rRNA. May be needed both before and after RbfA during the maturation of 16S rRNA. It has affinity for free ribosomal 30S subunits but not for 70S ribosomes. This chain is Ribosome maturation factor RimM, found in Orientia tsutsugamushi (strain Ikeda) (Rickettsia tsutsugamushi).